A 209-amino-acid polypeptide reads, in one-letter code: High frequency lysogenization protein HflD homolog (209 aa).

It belongs to the HflD family.

The protein resides in the cytoplasm. It localises to the cell inner membrane. The polypeptide is High frequency lysogenization protein HflD homolog (Halorhodospira halophila (strain DSM 244 / SL1) (Ectothiorhodospira halophila (strain DSM 244 / SL1))).